The chain runs to 1179 residues: Pesticidal crystal protein Cry1Ad (1179 aa).

Belongs to the delta endotoxin family.

In terms of biological role, promotes colloidosmotic lysis by binding to the midgut epithelial cells of many lepidopteran larvae. The chain is Pesticidal crystal protein Cry1Ad (cry1Ad) from Bacillus thuringiensis subsp. aizawai.